The sequence spans 409 residues: Arginine deiminase (409 aa).

Catalysis depends on Cys399, which acts as the Amidino-cysteine intermediate.

The protein belongs to the arginine deiminase family.

Its subcellular location is the cytoplasm. It carries out the reaction L-arginine + H2O = L-citrulline + NH4(+). It participates in amino-acid degradation; L-arginine degradation via ADI pathway; carbamoyl phosphate from L-arginine: step 1/2. This chain is Arginine deiminase, found in Streptococcus pneumoniae (strain P1031).